A 233-amino-acid polypeptide reads, in one-letter code: 5-demethoxyubiquinone hydroxylase, mitochondrial (233 aa).

The transit peptide at 1–15 (MLSRVSVFKPASRGF) directs the protein to the mitochondrion. Residues Ser-20 and Ser-28 each carry the phosphoserine modification. Thr-32 bears the Phosphothreonine mark. Positions 63, 95, 98, 147, 194, and 197 each coordinate Fe cation.

This sequence belongs to the COQ7 family. As to quaternary structure, component of a multi-subunit COQ enzyme complex, composed of at least COQ3, COQ4, COQ5, COQ6, COQ7 and COQ9. Requires Fe cation as cofactor. Post-translationally, phosphorylated. Dephosphorylated by PTC7; dephosphorylation is essential for enzyme activation.

The protein localises to the mitochondrion inner membrane. It catalyses the reaction a 5-methoxy-2-methyl-3-(all-trans-polyprenyl)benzene-1,4-diol + AH2 + O2 = a 3-demethylubiquinol + A + H2O. It carries out the reaction a 5-methoxy-2-methyl-3-(all-trans-polyprenyl)benzoquinone + NADH + O2 = a 3-demethylubiquinone + NAD(+) + H2O. The protein operates within cofactor biosynthesis; ubiquinone biosynthesis. Its activity is regulated as follows. Dephosphorylation by PTC7 leads to activation. In terms of biological role, catalyzes the hydroxylation of 2-hexaprenyl-3-methyl-6-methoxy-1,4-benzoquinol (DMQH2) during ubiquinone biosynthesis. Also catalyzes the hydroxylation of the 5-methoxy-2-methyl-3-(all-trans-polyprenyl)benzoquinone at the C6 position and participates in the biosynthesis of ubiquinone. Also has a structural role in the COQ enzyme complex, stabilizing COQ3 and COQ4 polypeptides. This is 5-demethoxyubiquinone hydroxylase, mitochondrial from Saccharomyces cerevisiae (strain ATCC 204508 / S288c) (Baker's yeast).